A 977-amino-acid polypeptide reads, in one-letter code: Pro-apoptotic serine protease NMA111 (977 aa).

The interval 1 to 36 (MTIQAHKRTLSEVSTSSVGQLKRREGYTEDYTDEGS) is disordered. The serine protease stretch occupies residues 64 to 254 (VVSVHFAQVA…LPLDRILRAL (191 aa)). Residues histidine 102, aspartate 133, and serine 216 each act as charge relay system in the active site. 2 PDZ domains span residues 271–356 (QWLL…LVVQ) and 749–835 (SVLQ…VRKG).

The protein belongs to the peptidase S1C family.

The protein resides in the nucleus. Its function is as follows. Nuclear serine protease which mediates apoptosis. In Eremothecium gossypii (strain ATCC 10895 / CBS 109.51 / FGSC 9923 / NRRL Y-1056) (Yeast), this protein is Pro-apoptotic serine protease NMA111 (NMA111).